The sequence spans 649 residues: Thioredoxin reductase 1, cytoplasmic (649 aa).

M1 carries the post-translational modification N-acetylmethionine. The interval 1–49 (MGCAEGKAVAAAAPTELQTKGKNGDGRRRSAKDHHPGKTLPENPAGFTS) is disordered. A compositionally biased stretch (basic and acidic residues) spans 22-36 (KNGDGRRRSAKDHHP). A Glutaredoxin domain is found at 56–156 (RALLQAYIDG…KLLKMNGPED (101 aa)). The interval 145–149 (LQKLL) is required for interaction with ESR1 and ESR2. FAD is bound by residues 172-173 (SG), 192-193 (DF), 208-209 (TC), and 213-217 (GCIPK). Residues C209 and C214 are joined by a disulfide bond. An N6-succinyllysine modification is found at K218. Y281 bears the Phosphotyrosine mark. Residues 281–282 (YG) and T311 each bind FAD. Residues R316, 348–354 (ASYVALE), 371–372 (RS), R376, 376–378 (RGF), 442–443 (GR), and K465 contribute to the NADP(+) site. Y350 lines the FAD pocket. Residues D484, 491–493 (ELT), and H622 each bind FAD. E491 is an NADP(+) binding site. The active-site Proton acceptor is the H622. A cross-link (cysteinyl-selenocysteine (Cys-Sec)) is located at residues 647–648 (CU). Position 648 (U648) is a non-standard amino acid, selenocysteine.

It belongs to the class-I pyridine nucleotide-disulfide oxidoreductase family. In terms of assembly, homodimer. Interacts with HERC5. Interacts with ESR1 and ESR2. The cofactor is FAD. The N-terminus is blocked. In terms of processing, ISGylated. As to expression, expressed predominantly in Leydig cells (at protein level). Also expressed in ovary, spleen, heart, liver, kidney and pancreas and in a number of cancer cell lines. In terms of tissue distribution, widely expressed with highest levels in kidney, testis, uterus, ovary, prostate, placenta and fetal liver.

The protein localises to the cytoplasm. Its subcellular location is the nucleus. It catalyses the reaction [thioredoxin]-dithiol + NADP(+) = [thioredoxin]-disulfide + NADPH + H(+). It carries out the reaction H2O2 + NADPH + H(+) = NADP(+) + 2 H2O. In terms of biological role, reduces disulfideprotein thioredoxin (Trx) to its dithiol-containing form. Homodimeric flavoprotein involved in the regulation of cellular redox reactions, growth and differentiation. Contains a selenocysteine residue at the C-terminal active site that is essential for catalysis. Also has reductase activity on hydrogen peroxide (H2O2). Its function is as follows. Induces actin and tubulin polymerization, leading to formation of cell membrane protrusions. Enhances the transcriptional activity of estrogen receptors ESR1 and ESR2. Functionally, enhances the transcriptional activity of the estrogen receptor ESR2 only. Mediates cell death induced by a combination of interferon-beta and retinoic acid. The chain is Thioredoxin reductase 1, cytoplasmic from Homo sapiens (Human).